Consider the following 607-residue polypeptide: CRISPR-associated DNA-binding protein Cas12m (607 aa).

The wedge domain (WED-N) stretch occupies residues 1–16; sequence MTRVTVQTAGVHYKWQ. Residues 17 to 189 are recognition domain (REC); the sequence is MPDQLTQQLR…QLRHHRWDGT (173 aa). Residues 50 to 124 are roof in REC; that stretch reads WSSYPAVAAL…IASVRDEATE (75 aa). The segment covering 74–83 has biased composition (basic and acidic residues); the sequence is ASTVKEEKSR. Residues 74–94 form a disordered region; the sequence is ASTVKEEKSRQRTKRPSHPAV. A wedge domain (WED-C) region spans residues 190 to 315; the sequence is GTISVQLQRQ…KIPDQGEVDE (126 aa). The interval 316–559 is ruvC-I; the sequence is GPTIAVHLGW…TVSHTGLSRV (244 aa). Residues 391-452 are ruvC insertion; sequence SIRDTLVAWL…EGADIAETLE (62 aa). The target nucleic-acid binding (TNB) stretch occupies residues 552–588; that stretch reads SHTGLSRVHAACGHENPADDRYLMQPVLCDGCGRTYD. Residues histidine 560, cysteine 563, cysteine 580, and cysteine 583 each contribute to the Zn(2+) site. The tract at residues 589–607 is ruvC-II; it reads TDLSATILMLQRASAATSN. Aspartate 590 provides a ligand contact to Mg(2+).

Belongs to the CRISPR-associated DNA-binding protein Cas12m family. In terms of assembly, binds crRNA and target dsDNA as a monomer. Requires Mg(2+) as cofactor. The cofactor is Zn(2+).

In terms of biological role, CRISPR (clustered regularly interspaced short palindromic repeat), is an adaptive immune system that provides protection against mobile genetic elements (viruses, transposable elements and conjugative plasmids). CRISPR clusters contain sequences complementary to antecedent mobile elements and target invading nucleic acids. CRISPR clusters are transcribed and processed into CRISPR RNA (crRNA). Recognizes a short motif in the CRISPR repeat sequences (the 5' PAM or protospacer adjacent motif, 5'-TTN-3' in this organism) to help distinguish self versus nonself, as targets within the bacterial CRISPR locus do not have PAMs. Upon expression in E.coli as a CRISPR locus inhibits plasmid propagation when targeted to regions essential for plasmid propagation (replication origin and a selectable marker); inhibits expression of a non-selectable marker, probably at the transcriptional level. Protects E.coli against bacteriophage M13mp18, to a lesser extent against lambda and VpaE1 as well as phage T4 with hydroxymethyl or unmodified (but not glycosylated) cytosines. Preferentially binds to its associated crRNA. Cas12m-crRNA binds DNA in a PAM-dependent, crRNA-guided fashion. Binds a 20-bp crRNA-ss-target DNA heteroduplex, in a 52 nucleotide crRNA. No dsDNA, ssDNA or RNA nuclease activity is seen for the crRNA-Cas12m complex. Probably required for pre-crRNA processing to mature crRNA. The sequence is that of CRISPR-associated DNA-binding protein Cas12m from Gordonia otitidis (strain DSM 44809 / CCUG 52243 / JCM 12355 / NBRC 100426 / IFM 10032).